Reading from the N-terminus, the 26-residue chain is Thioredoxin H-type (26 aa).

It belongs to the thioredoxin family. Plant H-type subfamily.

The protein resides in the cytoplasm. Its function is as follows. Participates in various redox reactions through the reversible oxidation of the active center dithiol to a disulfide. The H form is known to activate a number of cytosolic enzymes. The protein is Thioredoxin H-type of Populus euphratica (Euphrates poplar).